The following is a 160-amino-acid chain: MTDQQAEARSYLSEEMIAEFKAAFDMFDADGGGDISVKELGTVMRMLGQTPTKEELDAIIEEVDEDGSGTIDFEEFLVMMVRQMKEDAKGKSEEELAECFRIFDRNADGYIDPEELAEIFRASGEHVTDEEIESLMKDGDKNNDGRIDFDEFLKMMEGVQ.

T2 carries the N-acetylthreonine modification. 4 consecutive EF-hand domains span residues 15 to 50 (EMIA…LGQT), 51 to 86 (PTKE…QMKE), 91 to 126 (KSEE…SGEH), and 127 to 160 (VTDE…EGVQ). Residues D28, D30, D34, E39, D64, D66, S68, T70, E75, D104, N106, D108, Y110, E115, D140, N142, D144, R146, and E151 each coordinate Ca(2+).

It belongs to the troponin C family.

Its function is as follows. Troponin is the central regulatory protein of striated muscle contraction. Tn consists of three components: Tn-I which is the inhibitor of actomyosin ATPase, Tn-T which contains the binding site for tropomyosin and Tn-C. The binding of calcium to Tn-C abolishes the inhibitory action of Tn on actin filaments. In Homo sapiens (Human), this protein is Troponin C, skeletal muscle (TNNC2).